The chain runs to 400 residues: Elongation factor Tu 2 (400 aa).

The tr-type G domain maps to 10–209; the sequence is KPHVNIGTIG…KVDEYIPTPQ (200 aa). The G1 stretch occupies residues 19–26; it reads GHVDHGKT. 19 to 26 lines the GTP pocket; sequence GHVDHGKT. Residue Thr-26 coordinates Mg(2+). Residues 60 to 64 form a G2 region; sequence GITIN. The tract at residues 81–84 is G3; that stretch reads DCPG. GTP contacts are provided by residues 81 to 85 and 136 to 139; these read DCPGH and NKAD. A G4 region spans residues 136 to 139; it reads NKAD. The segment at 174 to 176 is G5; the sequence is SAL.

It belongs to the TRAFAC class translation factor GTPase superfamily. Classic translation factor GTPase family. EF-Tu/EF-1A subfamily. As to quaternary structure, monomer.

Its subcellular location is the cytoplasm. It carries out the reaction GTP + H2O = GDP + phosphate + H(+). Functionally, GTP hydrolase that promotes the GTP-dependent binding of aminoacyl-tRNA to the A-site of ribosomes during protein biosynthesis. The chain is Elongation factor Tu 2 from Carboxydothermus hydrogenoformans (strain ATCC BAA-161 / DSM 6008 / Z-2901).